The following is a 351-amino-acid chain: Protein TBATA (351 aa).

Disordered regions lie at residues 16 to 40 (KAELKLEKKSGRKPRSPRDSGPQKE), 167 to 186 (KKEKEQKEEPLREQGAKYSA), 195 to 216 (STRAVGRRRSHQGQQSQSSSRH), and 292 to 351 (EVHE…RAES). A compositionally biased stretch (basic and acidic residues) spans 167 to 181 (KKEKEQKEEPLREQG). Composition is skewed to basic and acidic residues over residues 292–302 (EVHEPPQEKQE) and 340–351 (TEKKTSKPRAES).

The protein belongs to the TBATA family.

The protein resides in the cytoplasm. It localises to the cytosol. Its function is as follows. May play a role in spermatid differentiation. Modulates thymic stromal cell proliferation and thymus function. This chain is Protein TBATA (TBATA), found in Homo sapiens (Human).